Consider the following 188-residue polypeptide: dCTP deaminase (188 aa).

DCTP-binding positions include 111–116 (KSTYAR), 135–137 (TLE), Gln156, Tyr170, and Gln180. Glu137 functions as the Proton donor/acceptor in the catalytic mechanism.

Belongs to the dCTP deaminase family. As to quaternary structure, homotrimer.

It catalyses the reaction dCTP + H2O + H(+) = dUTP + NH4(+). It functions in the pathway pyrimidine metabolism; dUMP biosynthesis; dUMP from dCTP (dUTP route): step 1/2. Its function is as follows. Catalyzes the deamination of dCTP to dUTP. The sequence is that of dCTP deaminase from Paracidovorax citrulli (strain AAC00-1) (Acidovorax citrulli).